A 360-amino-acid polypeptide reads, in one-letter code: Replication-associated protein (360 aa).

A CRESS-DNA virus Rep endonuclease domain is found at 11–114 (SHRNANTFLT…PLAVFERGTF (104 aa)). Positions 18–21 (FLTY) match the RCR-1 motif. Residues Glu52, His60, and His62 each coordinate a divalent metal cation. The RCR-2 motif lies at 60–62 (HLH). Tyr100 serves as the catalytic For DNA cleavage activity. Positions 100-103 (YILK) match the RCR-3 motif. Glu104 contacts a divalent metal cation. The segment at 175–187 (SANKLFPEIQEEF) is oligomerization. 229-236 (GPTRTGKS) is a binding site for ATP. A transactivation region spans residues 252-270 (VDWSSYNEDAIYNIVDDIP). The Nuclear localization signal signature appears at 292 to 303 (KYGKKKKVQKKS).

Belongs to the geminiviridae Rep protein family. Homooligomer. Rep binds to repeated DNA motifs (iterons). Forms the O-complex, which is a Rep-DNA complex involved in the initiation of RCR. Part of the C- and V-complexes which are RepA-Rep-DNA complexes involved in the c-sense and v-sense transcription. The cofactor is Mg(2+). Requires Mn(2+) as cofactor.

Its subcellular location is the host nucleus. Functionally, essential for the replication of viral ssDNA. The closed circular ssDNA genome is first converted to a superhelical dsDNA. Rep binds a specific region at the genome origin of replication. It introduces an endonucleolytic nick within the conserved sequence 5'-TAATATTAC-3' in the intergenic region of the genome present in all geminiviruses, thereby initiating the rolling circle replication (RCR). Following cleavage, binds covalently to the 5'-phosphate of DNA as a tyrosyl ester. The cleavage gives rise to a free 3'-OH that serves as a primer for the cellular DNA polymerase. The polymerase synthesizes the (+) strand DNA by rolling circle mechanism. After one round of replication, a Rep-catalyzed nucleotidyl transfer reaction releases a circular single-stranded virus genome, thereby terminating the replication. Displays origin-specific DNA cleavage, nucleotidyl transferase, ATPase and helicase activities. Acts as an inhibitor of C-sense gene transcription. This Avena sativa (Oat) protein is Replication-associated protein.